The following is a 60-amino-acid chain: Putative SERF-like protein (60 aa).

A compositionally biased stretch (basic and acidic residues) spans 1–53 (MTRGNQRDLARQKNQKKQADLTKGKRTDNLTVEQRKARDAELMREKQKKKEEA). The tract at residues 1-60 (MTRGNQRDLARQKNQKKQADLTKGKRTDNLTVEQRKARDAELMREKQKKKEEAAAAGTSK) is disordered.

Belongs to the SERF family.

The chain is Putative SERF-like protein from Drosophila melanogaster (Fruit fly).